The sequence spans 208 residues: NAD(P)H-hydrate epimerase (208 aa).

A YjeF N-terminal domain is found at 11-208 (MRAKDQFTIN…VIVADDMGTY (198 aa)). 59-63 (NNGGD) provides a ligand contact to (6S)-NADPHX. K(+)-binding residues include N60 and D122. Residues 126-132 (GIGIDRP), Y137, and D155 each bind (6S)-NADPHX. A K(+)-binding site is contributed by S158.

Belongs to the NnrE/AIBP family. Requires K(+) as cofactor.

The catalysed reaction is (6R)-NADHX = (6S)-NADHX. The enzyme catalyses (6R)-NADPHX = (6S)-NADPHX. In terms of biological role, catalyzes the epimerization of the S- and R-forms of NAD(P)HX, a damaged form of NAD(P)H that is a result of enzymatic or heat-dependent hydration. This is a prerequisite for the S-specific NAD(P)H-hydrate dehydratase to allow the repair of both epimers of NAD(P)HX. The chain is NAD(P)H-hydrate epimerase from Limosilactobacillus fermentum (strain NBRC 3956 / LMG 18251) (Lactobacillus fermentum).